The primary structure comprises 210 residues: LexA repressor (210 aa).

A DNA-binding region (H-T-H motif) is located at residues 31-51 (RVEISKELGFRSPNAAEEHLK). Active-site for autocatalytic cleavage activity residues include Ser126 and Lys163.

It belongs to the peptidase S24 family. In terms of assembly, homodimer.

The enzyme catalyses Hydrolysis of Ala-|-Gly bond in repressor LexA.. In terms of biological role, represses a number of genes involved in the response to DNA damage (SOS response), including recA and lexA. In the presence of single-stranded DNA, RecA interacts with LexA causing an autocatalytic cleavage which disrupts the DNA-binding part of LexA, leading to derepression of the SOS regulon and eventually DNA repair. This is LexA repressor from Histophilus somni (strain 129Pt) (Haemophilus somnus).